Reading from the N-terminus, the 483-residue chain is MHQLTLAEIARGLADKSFSSEELTGALLSRIKQLDPQLNSFITVTEEQALHQARAADARRAAGETGALLGAPIAHKDLFCTQGVRTSCGSKMLDNFTAPYDATVVAKLAEAGMVTLGKTNMDEFAMGSANESSHYGAVKNPWNLEHVPGGSSGGSAAAVAARLLPATTGTDTGGSIRQPAALTNLTGLKPTYGRVSRWGMIAYASSLDQGGPLARTAEDCALLLQGMAGFDSKDSTSVEEPVPNFSADLNASLQGLRIGLPKEYFGAGLDPRIAERVQASVKELEKLGAVVKEISLPNMQHAIAAYYVIAPAEASSNLSRFDGVRFGHRCADPKDLTDLYKRSRGEGFGVEVQRRIMVGTYALSAGYYDAYYVKAQQIRRLIKNDFVAAFNDVDVIIGPTTPNPAWKIGAKAGDPIAEYLEDLYTITANLAGLPGLSMPAGFVDGLPVGVQLLAPYFQEGRLLNIAHRYQQVTDWHTRAPNGF.

Catalysis depends on charge relay system residues Lys-76 and Ser-151. Ser-175 (acyl-ester intermediate) is an active-site residue.

The protein belongs to the amidase family. GatA subfamily. In terms of assembly, heterotrimer of A, B and C subunits.

It catalyses the reaction L-glutamyl-tRNA(Gln) + L-glutamine + ATP + H2O = L-glutaminyl-tRNA(Gln) + L-glutamate + ADP + phosphate + H(+). Allows the formation of correctly charged Gln-tRNA(Gln) through the transamidation of misacylated Glu-tRNA(Gln) in organisms which lack glutaminyl-tRNA synthetase. The reaction takes place in the presence of glutamine and ATP through an activated gamma-phospho-Glu-tRNA(Gln). The sequence is that of Glutamyl-tRNA(Gln) amidotransferase subunit A from Pseudomonas entomophila (strain L48).